A 182-amino-acid chain; its full sequence is Crossover junction endodeoxyribonuclease RuvC (182 aa).

Active-site residues include Asp7, Glu67, and Asp139. The Mg(2+) site is built by Asp7, Glu67, and Asp139.

This sequence belongs to the RuvC family. As to quaternary structure, homodimer which binds Holliday junction (HJ) DNA. The HJ becomes 2-fold symmetrical on binding to RuvC with unstacked arms; it has a different conformation from HJ DNA in complex with RuvA. In the full resolvosome a probable DNA-RuvA(4)-RuvB(12)-RuvC(2) complex forms which resolves the HJ. Mg(2+) is required as a cofactor.

It is found in the cytoplasm. It carries out the reaction Endonucleolytic cleavage at a junction such as a reciprocal single-stranded crossover between two homologous DNA duplexes (Holliday junction).. Functionally, the RuvA-RuvB-RuvC complex processes Holliday junction (HJ) DNA during genetic recombination and DNA repair. Endonuclease that resolves HJ intermediates. Cleaves cruciform DNA by making single-stranded nicks across the HJ at symmetrical positions within the homologous arms, yielding a 5'-phosphate and a 3'-hydroxyl group; requires a central core of homology in the junction. The consensus cleavage sequence is 5'-(A/T)TT(C/G)-3'. Cleavage occurs on the 3'-side of the TT dinucleotide at the point of strand exchange. HJ branch migration catalyzed by RuvA-RuvB allows RuvC to scan DNA until it finds its consensus sequence, where it cleaves and resolves the cruciform DNA. The protein is Crossover junction endodeoxyribonuclease RuvC of Bordetella petrii (strain ATCC BAA-461 / DSM 12804 / CCUG 43448).